The chain runs to 813 residues: Xaa-Pro dipeptidyl-peptidase (813 aa).

Catalysis depends on charge relay system residues Ser-375, Asp-495, and His-526.

It belongs to the peptidase S15 family. As to quaternary structure, homodimer.

It is found in the cytoplasm. It carries out the reaction Hydrolyzes Xaa-Pro-|- bonds to release unblocked, N-terminal dipeptides from substrates including Ala-Pro-|-p-nitroanilide and (sequentially) Tyr-Pro-|-Phe-Pro-|-Gly-Pro-|-Ile.. Functionally, removes N-terminal dipeptides sequentially from polypeptides having unsubstituted N-termini provided that the penultimate residue is proline. This Lactiplantibacillus plantarum (strain ATCC BAA-793 / NCIMB 8826 / WCFS1) (Lactobacillus plantarum) protein is Xaa-Pro dipeptidyl-peptidase.